A 67-amino-acid chain; its full sequence is Small ribosomal subunit protein eS27 (67 aa).

The Zn(2+) site is built by C22, C25, C41, and C44. The C4-type zinc-finger motif lies at 22 to 44 (CPDCGNEQVVFSHAAMVVRCLVC).

Belongs to the eukaryotic ribosomal protein eS27 family. In terms of assembly, part of the 30S ribosomal subunit. Zn(2+) serves as cofactor.

The sequence is that of Small ribosomal subunit protein eS27 from Pyrobaculum islandicum (strain DSM 4184 / JCM 9189 / GEO3).